Consider the following 536-residue polypeptide: Putative UDP-glucuronosyltransferase ugt-47 (536 aa).

Positions 1 to 21 (MMLQTSTILQLLLFLVGSVSA) are cleaved as a signal peptide. Residues Asn-52 and Asn-308 are each glycosylated (N-linked (GlcNAc...) asparagine). Residues 497 to 517 (IIVPVLFVLLYCLIIPFFKLI) form a helical membrane-spanning segment.

This sequence belongs to the UDP-glycosyltransferase family.

The protein localises to the membrane. The catalysed reaction is glucuronate acceptor + UDP-alpha-D-glucuronate = acceptor beta-D-glucuronoside + UDP + H(+). This chain is Putative UDP-glucuronosyltransferase ugt-47 (ugt-47), found in Caenorhabditis briggsae.